The following is a 678-amino-acid chain: Vitrin (678 aa).

Positions 1-26 (MRTVVLTMKASVIEMFLVLLVTGVHS) are cleaved as a signal peptide. The LCCL domain occupies 40–133 (TVPQINCDVK…LSLPRWRESF (94 aa)). Intrachain disulfides connect Cys46/Cys62 and Cys66/Cys86. Residues 154–168 (SSKSPAAQAGETTKA) show a composition bias toward polar residues. 2 disordered regions span residues 154 to 177 (SSKSPAAQAGETTKAYQRPPIPGT) and 199 to 257 (TLPR…GAAF). Over residues 199–216 (TLPRPSPSAASTTSIPRP) the composition is skewed to low complexity. The span at 230 to 240 (STATYTSSQNR) shows a compositional bias: polar residues. VWFA domains lie at 293-478 (DLSF…VKRV) and 495-668 (DIGF…IQNI). N-linked (GlcNAc...) asparagine glycosylation is found at Asn390 and Asn520.

As to quaternary structure, binds dermatan sulfate and chondroitin sulfate.

It localises to the secreted. It is found in the extracellular space. Its subcellular location is the extracellular matrix. In terms of biological role, promotes matrix assembly and cell adhesiveness. Plays a role in spinal cord formation by regulating the proliferation and differentiation of neural stem cells. The sequence is that of Vitrin (VIT) from Homo sapiens (Human).